The primary structure comprises 295 residues: Phosphatidylserine decarboxylase proenzyme (295 aa).

Residues D90, H147, and S254 each act as charge relay system; for autoendoproteolytic cleavage activity in the active site. The Schiff-base intermediate with substrate; via pyruvic acid; for decarboxylase activity role is filled by S254. Residue S254 is modified to Pyruvic acid (Ser); by autocatalysis.

It belongs to the phosphatidylserine decarboxylase family. PSD-B subfamily. Prokaryotic type I sub-subfamily. In terms of assembly, heterodimer of a large membrane-associated beta subunit and a small pyruvoyl-containing alpha subunit. Pyruvate is required as a cofactor. Is synthesized initially as an inactive proenzyme. Formation of the active enzyme involves a self-maturation process in which the active site pyruvoyl group is generated from an internal serine residue via an autocatalytic post-translational modification. Two non-identical subunits are generated from the proenzyme in this reaction, and the pyruvate is formed at the N-terminus of the alpha chain, which is derived from the carboxyl end of the proenzyme. The autoendoproteolytic cleavage occurs by a canonical serine protease mechanism, in which the side chain hydroxyl group of the serine supplies its oxygen atom to form the C-terminus of the beta chain, while the remainder of the serine residue undergoes an oxidative deamination to produce ammonia and the pyruvoyl prosthetic group on the alpha chain. During this reaction, the Ser that is part of the protease active site of the proenzyme becomes the pyruvoyl prosthetic group, which constitutes an essential element of the active site of the mature decarboxylase.

It localises to the cell membrane. It catalyses the reaction a 1,2-diacyl-sn-glycero-3-phospho-L-serine + H(+) = a 1,2-diacyl-sn-glycero-3-phosphoethanolamine + CO2. The protein operates within phospholipid metabolism; phosphatidylethanolamine biosynthesis; phosphatidylethanolamine from CDP-diacylglycerol: step 2/2. Catalyzes the formation of phosphatidylethanolamine (PtdEtn) from phosphatidylserine (PtdSer). The polypeptide is Phosphatidylserine decarboxylase proenzyme (Sodalis glossinidius (strain morsitans)).